Reading from the N-terminus, the 241-residue chain is Small ribosomal subunit protein uS10m (241 aa).

The transit peptide at 1–54 (MIAGVLRRSSLPSRQTLSAALASFNSCISHNLTPATTGASVSSRFTLASSPNSF) directs the protein to the mitochondrion.

This sequence belongs to the universal ribosomal protein uS10 family. Component of the mitochondrial ribosome small subunit.

The protein localises to the mitochondrion. This chain is Small ribosomal subunit protein uS10m (RPS10), found in Arabidopsis thaliana (Mouse-ear cress).